We begin with the raw amino-acid sequence, 421 residues long: Testin (421 aa).

The PET domain occupies 92–199 (MILTNPVAAK…GDVKLPREMD (108 aa)). The interval 133–164 (EKQPVAGSEGAQYRKKQLAKQLPAHDQDPSKC) is disordered. Residues 155-164 (PAHDQDPSKC) are compositionally biased toward basic and acidic residues. LIM zinc-binding domains lie at 234–297 (YSCY…CDSE), 299–359 (PRCA…NHAV), and 362–421 (QGCH…KMMS).

The protein belongs to the prickle / espinas / testin family. Interacts via LIM domain 1 with ZYX. Interacts (via LIM domain 3) with ENAH and VASP. Interacts with ALKBH4, talin, actin, alpha-actinin, GRIP1 and PXN. Interacts (via LIM domain 2) with ACTL7A (via N-terminus). Heterodimer with ACTL7A; the heterodimer interacts with ENAH to form a heterotrimer.

Its subcellular location is the cytoplasm. The protein resides in the cell junction. The protein localises to the focal adhesion. Functionally, scaffold protein that may play a role in cell adhesion, cell spreading and in the reorganization of the actin cytoskeleton. Plays a role in the regulation of cell proliferation. May act as a tumor suppressor. In Canis lupus familiaris (Dog), this protein is Testin (TES).